We begin with the raw amino-acid sequence, 122 residues long: Large ribosomal subunit protein uL14 (122 aa).

Belongs to the universal ribosomal protein uL14 family. Part of the 50S ribosomal subunit. Forms a cluster with proteins L3 and L19. In the 70S ribosome, L14 and L19 interact and together make contacts with the 16S rRNA in bridges B5 and B8.

Functionally, binds to 23S rRNA. Forms part of two intersubunit bridges in the 70S ribosome. The sequence is that of Large ribosomal subunit protein uL14 from Syntrophobacter fumaroxidans (strain DSM 10017 / MPOB).